The following is a 112-amino-acid chain: Nitrogen regulatory protein P-II (112 aa).

An O-UMP-tyrosine modification is found at Tyr51.

The protein belongs to the P(II) protein family. Homotrimer.

It localises to the plastid. The protein resides in the chloroplast. P-II indirectly controls the transcription of the glutamine synthetase gene (glnA). P-II prevents NR-II-catalyzed conversion of NR-I to NR-I-phosphate, the transcriptional activator of glnA. When P-II is uridylylated to P-II-UMP, these events are reversed. When the ratio of Gln to 2-ketoglutarate decreases, P-II is uridylylated to P-II-UMP, which causes the deadenylation of glutamine synthetase, so activating the enzyme. The protein is Nitrogen regulatory protein P-II (glnB) of Pyropia yezoensis (Susabi-nori).